We begin with the raw amino-acid sequence, 228 residues long: L-ribulose-5-phosphate 4-epimerase UlaF (228 aa).

Substrate is bound by residues 26–27 (GN), 43–44 (SG), and 72–73 (SS). The Zn(2+) site is built by D74, H93, and H95. The active-site Proton donor/acceptor is D118. H167 provides a ligand contact to Zn(2+). The Proton donor/acceptor role is filled by Y225.

It belongs to the aldolase class II family. AraD/FucA subfamily. Requires Zn(2+) as cofactor.

The enzyme catalyses L-ribulose 5-phosphate = D-xylulose 5-phosphate. It participates in cofactor degradation; L-ascorbate degradation; D-xylulose 5-phosphate from L-ascorbate: step 4/4. Catalyzes the isomerization of L-ribulose 5-phosphate to D-xylulose 5-phosphate. Is involved in the anaerobic L-ascorbate utilization. The sequence is that of L-ribulose-5-phosphate 4-epimerase UlaF from Escherichia coli O7:K1 (strain IAI39 / ExPEC).